Consider the following 626-residue polypeptide: UvrABC system protein C (626 aa).

Residues glutamate 20–isoleucine 97 enclose the GIY-YIG domain. The UVR domain occupies isoleucine 207–valine 242.

The protein belongs to the UvrC family. In terms of assembly, interacts with UvrB in an incision complex.

The protein localises to the cytoplasm. Functionally, the UvrABC repair system catalyzes the recognition and processing of DNA lesions. UvrC both incises the 5' and 3' sides of the lesion. The N-terminal half is responsible for the 3' incision and the C-terminal half is responsible for the 5' incision. The protein is UvrABC system protein C of Rickettsia prowazekii (strain Madrid E).